Reading from the N-terminus, the 360-residue chain is F420-dependent hydroxymycolic acid dehydrogenase (360 aa).

Positions 1-40 form a signal peptide, tat-type signal; that stretch reads MTGISRRTFGLAAGFGAIGAGGLGGGCSTRSGPTPTPEPA. Position 77 (D77) interacts with coenzyme F420-(gamma-Glu)n. H78 serves as the catalytic Proton donor. Residue 145-146 coordinates coenzyme F420-(gamma-Glu)n; the sequence is TG. E147 serves as the catalytic Proton acceptor. Residues N150 and 213–214 contribute to the coenzyme F420-(gamma-Glu)n site; that span reads SG.

It belongs to the F420-dependent hydroxymycolic acid dehydrogenase family. Homodimer. Post-translationally, is exported by the Tat system. The position of the signal peptide cleavage has not been experimentally proven. In terms of processing, may be lipidated.

It localises to the cell envelope. It functions in the pathway lipid metabolism; mycolic acid biosynthesis. Is inhibited by the anti-tuberculous drug PA-824, a bicyclic 4-nitroimidazole class compound. Therefore, this is consistent with the finding that PA-824 inhibits the formation of K-MAs and causes an accumulation of hydroxymycolic acids (H-MAs) in M.tuberculosis. Its function is as follows. Catalyzes the coenzyme F420-dependent oxidation of hydroxymycolic acids (H-MAs) to ketomycolic acids (K-MAs), a lipid class making up the mycobacterial pseudo-outer membrane and over one-third of the dry weight of M.tuberculosis. Does not exhibit F420-dependent glucose-6-phosphate dehydrogenase (FGD) activity. This chain is F420-dependent hydroxymycolic acid dehydrogenase, found in Mycobacterium tuberculosis (strain ATCC 25618 / H37Rv).